Here is a 648-residue protein sequence, read N- to C-terminus: DNA ligase (648 aa).

NAD(+) is bound by residues 30 to 34 and 79 to 80; these read DEEYD and SQ. The active-site N6-AMP-lysine intermediate is K110. NAD(+) contacts are provided by R131, E165, K280, and K304. 4 residues coordinate Zn(2+): C398, C401, C414, and C419. Residues 573–648 enclose the BRCT domain; the sequence is VSENPFKNKT…LTEEEMNSLF (76 aa).

The protein belongs to the NAD-dependent DNA ligase family. LigA subfamily. Requires Mg(2+) as cofactor. Mn(2+) is required as a cofactor.

It catalyses the reaction NAD(+) + (deoxyribonucleotide)n-3'-hydroxyl + 5'-phospho-(deoxyribonucleotide)m = (deoxyribonucleotide)n+m + AMP + beta-nicotinamide D-nucleotide.. Functionally, DNA ligase that catalyzes the formation of phosphodiester linkages between 5'-phosphoryl and 3'-hydroxyl groups in double-stranded DNA using NAD as a coenzyme and as the energy source for the reaction. It is essential for DNA replication and repair of damaged DNA. The chain is DNA ligase from Aliarcobacter butzleri (strain RM4018) (Arcobacter butzleri).